Here is a 434-residue protein sequence, read N- to C-terminus: Trigger factor (434 aa).

A PPIase FKBP-type domain is found at G160–P245.

The protein belongs to the FKBP-type PPIase family. Tig subfamily.

It localises to the cytoplasm. The catalysed reaction is [protein]-peptidylproline (omega=180) = [protein]-peptidylproline (omega=0). Its function is as follows. Involved in protein export. Acts as a chaperone by maintaining the newly synthesized protein in an open conformation. Functions as a peptidyl-prolyl cis-trans isomerase. The polypeptide is Trigger factor (Shewanella baltica (strain OS223)).